Here is a 358-residue protein sequence, read N- to C-terminus: 3-dehydroquinate synthase (358 aa).

NAD(+) contacts are provided by residues 70-75 (DGEQYK), 104-108 (GVIGD), 128-129 (TT), Lys141, Lys150, and 168-171 (CLST). Residues Glu183, His246, and His263 each contribute to the Zn(2+) site.

It belongs to the sugar phosphate cyclases superfamily. Dehydroquinate synthase family. Co(2+) is required as a cofactor. The cofactor is Zn(2+). Requires NAD(+) as cofactor.

It is found in the cytoplasm. The catalysed reaction is 7-phospho-2-dehydro-3-deoxy-D-arabino-heptonate = 3-dehydroquinate + phosphate. Its pathway is metabolic intermediate biosynthesis; chorismate biosynthesis; chorismate from D-erythrose 4-phosphate and phosphoenolpyruvate: step 2/7. Catalyzes the conversion of 3-deoxy-D-arabino-heptulosonate 7-phosphate (DAHP) to dehydroquinate (DHQ). The sequence is that of 3-dehydroquinate synthase from Shewanella woodyi (strain ATCC 51908 / MS32).